Here is a 48-residue protein sequence, read N- to C-terminus: MAVPKRRVSHSRAAKRRTHYKVTLPVPVKDKDGSWKMPHRINKTTGEY.

Residues 28 to 48 (VKDKDGSWKMPHRINKTTGEY) form a disordered region.

It belongs to the bacterial ribosomal protein bL32 family.

This Campylobacter concisus (strain 13826) protein is Large ribosomal subunit protein bL32.